A 314-amino-acid chain; its full sequence is MEWSEVEVHTTNEAVEPVANVLTEFGAAGVSIEDVADFLREREDKFGEIYALRREDYPEDGVIIKAYFLKTTEFVEQIPEIEQTLKNLSTFDIPLGKFQFVVNDVDDEEWATAWKKYYHPVQITDRITIVPSWESYTPSANEIIIELDPGMAFGTGTHPTTQLCIRALSNYLQPGDEVIDVGTGSGVLSIASAKLGAKSILATDLDEIATRAAEENITLNKTEHIITVKQNNLLQDINKTNVDIVVANILAEVILLFPEDVYKALKPGGVFIASGIIEDKAKVVEEALKNAGLIIEKMEQQGDWVAIISKRGVE.

S-adenosyl-L-methionine-binding residues include threonine 161, glycine 182, aspartate 204, and asparagine 248.

This sequence belongs to the methyltransferase superfamily. PrmA family.

It is found in the cytoplasm. The enzyme catalyses L-lysyl-[protein] + 3 S-adenosyl-L-methionine = N(6),N(6),N(6)-trimethyl-L-lysyl-[protein] + 3 S-adenosyl-L-homocysteine + 3 H(+). Functionally, methylates ribosomal protein L11. This is Ribosomal protein L11 methyltransferase from Listeria monocytogenes serotype 1/2a (strain 10403S).